The sequence spans 156 residues: MPRKGPAPKRQLMTDPVYGSPLVTALINKVLRDGKRSLAQSIVYNALEGAREKTGQDPLVILKRAIDNVKPTLEVRSRRVGGATYQVPVEVRASRSTTLALRWLVQYARLRREKTMTERLMNELVDASNGLGAAVKRREDTHKMAESNKAFAHYRW.

The protein belongs to the universal ribosomal protein uS7 family. Part of the 30S ribosomal subunit. Contacts proteins S9 and S11.

Its function is as follows. One of the primary rRNA binding proteins, it binds directly to 16S rRNA where it nucleates assembly of the head domain of the 30S subunit. Is located at the subunit interface close to the decoding center, probably blocks exit of the E-site tRNA. The chain is Small ribosomal subunit protein uS7 from Thermobifida fusca (strain YX).